The sequence spans 1362 residues: ATP-dependent RNA helicase dhx29 (1362 aa).

The segment covering 1 to 10 has biased composition (basic residues); it reads MGGKNKKNRH. A disordered region spans residues 1 to 76; that stretch reads MGGKNKKNRH…FASSSDSGVS (76 aa). Residues 18–27 are compositionally biased toward low complexity; sequence GATAAANRPR. A compositionally biased stretch (basic and acidic residues) spans 28 to 41; the sequence is AAAEPRPGGEDAAK. Positions 66 to 76 are enriched in low complexity; that stretch reads SFASSSDSGVS. Positions 89–109 form a coiled coil; the sequence is EAKLEKRIISLINEHKKLNSN. Disordered stretches follow at residues 182–215 and 229–257; these read QRAR…LKGN and EQGS…DPNE. Residues 231–242 are compositionally biased toward acidic residues; that stretch reads GSDDDDDDDDVK. The span at 243–257 shows a compositional bias: basic and acidic residues; the sequence is EEEKETTLEKFDPNE. Residues 285-305 adopt a coiled-coil conformation; that stretch reads QKEAQERIRGYQQEMKSLEDH. The disordered stretch occupies residues 317–336; it reads VKSESKQPKPALPPSEDEPL. One can recognise a Helicase ATP-binding domain in the interval 576–749; sequence LETLKRHRVI…FTHCPIIRIS (174 aa). 589–596 serves as a coordination point for ATP; the sequence is GETGSGKS. The DEAH box motif lies at 696-699; the sequence is DEVH. In terms of domain architecture, Helicase C-terminal spans 852-1021; sequence DISPEYRNVE…ELCLHIMKCD (170 aa).

The protein belongs to the DEAD box helicase family. DEAH subfamily. Part of the 43S pre-initiation complex (PIC).

It is found in the cytoplasm. The enzyme catalyses ATP + H2O = ADP + phosphate + H(+). Its function is as follows. ATP-binding RNA helicase involved in translation initiation. Part of the 43S pre-initiation complex that is required for efficient initiation on mRNAs of higher eukaryotes with structured 5'-UTRs by promoting efficient NTPase-dependent 48S complex formation. Specifically binds to the 40S ribosome near the mRNA entrance. Does not possess a processive helicase activity. The sequence is that of ATP-dependent RNA helicase dhx29 from Xenopus laevis (African clawed frog).